Reading from the N-terminus, the 309-residue chain is Transcription termination/antitermination protein NusG (309 aa).

2 disordered regions span residues 1-24 and 58-91; these read MSDP…ADDE and EGDH…VEAG. Acidic residues predominate over residues 65–91; it reads TDEDIEAGAVETDEDVETDTDEDVEAG.

It belongs to the NusG family.

In terms of biological role, participates in transcription elongation, termination and antitermination. This chain is Transcription termination/antitermination protein NusG, found in Streptomyces galbus.